The following is a 315-amino-acid chain: N-acetyl-gamma-glutamyl-phosphate reductase (315 aa).

Residue Cys117 is part of the active site.

Belongs to the NAGSA dehydrogenase family. Type 2 subfamily.

The protein resides in the cytoplasm. It catalyses the reaction N-acetyl-L-glutamate 5-semialdehyde + phosphate + NADP(+) = N-acetyl-L-glutamyl 5-phosphate + NADPH + H(+). The protein operates within amino-acid biosynthesis; L-arginine biosynthesis; N(2)-acetyl-L-ornithine from L-glutamate: step 3/4. Catalyzes the NADPH-dependent reduction of N-acetyl-5-glutamyl phosphate to yield N-acetyl-L-glutamate 5-semialdehyde. The chain is N-acetyl-gamma-glutamyl-phosphate reductase from Burkholderia lata (strain ATCC 17760 / DSM 23089 / LMG 22485 / NCIMB 9086 / R18194 / 383).